A 502-amino-acid chain; its full sequence is MHIKPEEITSIIKNEIKNYEKELETVDSGTIIQIGDGVARVYGLEECMEGELLEFPNQVFGMALNLEQDNVGCVLLGSEEGIKEGDIVKRTGKIVEVPVGEDLIGRVVNSLGQPIDGKGPIKNDGYRAIEVPAPGILERSSVNEPLQTGIKAIDSMIPIGRGQRELIIGDRQTGKTAIAIDTIINQKGKDVICIYVAIGQKQSTVANIVNTLTEEGAMDYSIVVTASASESAPLQYIAPYSGCTMGEYFMNKGKHVLIIYDDLSKHAVAYRTMSLLIRRPPGREAYPGDVFYIHSRLLERAAKLSKENGGGSLTALPIIETLAGDVTAYIPTNVISITDGQIFLETELFNAGQRPAVNPGISVSRVGGNAQIKAMKQVSGTLRLELAQYRELASFAQFGSDLDKDTQARLEKGKRLIEILKQDQYKPMAVEKQIMIIYAAVNNFLLDIKVSDIKKFEKEFLEYMDTHHREIGKAILDKKVLDDELKSALESAIVEFKKIFLM.

169–176 lines the ATP pocket; sequence GDRQTGKT.

The protein belongs to the ATPase alpha/beta chains family. F-type ATPases have 2 components, CF(1) - the catalytic core - and CF(0) - the membrane proton channel. CF(1) has five subunits: alpha(3), beta(3), gamma(1), delta(1), epsilon(1). CF(0) has three main subunits: a(1), b(2) and c(9-12). The alpha and beta chains form an alternating ring which encloses part of the gamma chain. CF(1) is attached to CF(0) by a central stalk formed by the gamma and epsilon chains, while a peripheral stalk is formed by the delta and b chains.

The protein localises to the cell membrane. It carries out the reaction ATP + H2O + 4 H(+)(in) = ADP + phosphate + 5 H(+)(out). Its function is as follows. Produces ATP from ADP in the presence of a proton gradient across the membrane. The alpha chain is a regulatory subunit. The chain is ATP synthase subunit alpha from Clostridium perfringens (strain SM101 / Type A).